The following is a 311-amino-acid chain: Cytosolic Fe-S cluster assembly factor Nubp1 homolog (311 aa).

[4Fe-4S] cluster contacts are provided by Cys-9, Cys-23, Cys-26, and Cys-32. An ATP-binding site is contributed by 63–70 (GKGGVGKS). Cys-240 and Cys-243 together coordinate [4Fe-4S] cluster.

Belongs to the Mrp/NBP35 ATP-binding proteins family. NUBP1/NBP35 subfamily. Heterotetramer of 2 Nubp1 and 2 Nubp2 chains. It depends on [4Fe-4S] cluster as a cofactor.

The protein localises to the cytoplasm. Functionally, component of the cytosolic iron-sulfur (Fe/S) protein assembly (CIA) machinery. Required for maturation of extramitochondrial Fe-S proteins. The Nubp1-Nubp2 heterotetramer forms a Fe-S scaffold complex, mediating the de novo assembly of an Fe-S cluster and its transfer to target apoproteins. The sequence is that of Cytosolic Fe-S cluster assembly factor Nubp1 homolog from Drosophila pseudoobscura pseudoobscura (Fruit fly).